The sequence spans 101 residues: MFDQTTNTETHQLTVGKIETANGTIKPQLLRDAVKRAVTNFFAQMDGQEAEEVYEMVLSEVEAPLLDIIMQHTRGNQTRAANMLGINRGTLRKKLKKYGMN.

Positions 77–96 form a DNA-binding region, H-T-H motif; it reads QTRAANMLGINRGTLRKKLK.

This sequence belongs to the transcriptional regulatory Fis family. As to quaternary structure, homodimer.

Activates ribosomal RNA transcription. Plays a direct role in upstream activation of rRNA promoters. This chain is DNA-binding protein Fis, found in Shewanella sediminis (strain HAW-EB3).